We begin with the raw amino-acid sequence, 119 residues long: Large ribosomal subunit protein bL20 (119 aa).

The protein belongs to the bacterial ribosomal protein bL20 family.

Functionally, binds directly to 23S ribosomal RNA and is necessary for the in vitro assembly process of the 50S ribosomal subunit. It is not involved in the protein synthesizing functions of that subunit. In Shewanella frigidimarina (strain NCIMB 400), this protein is Large ribosomal subunit protein bL20.